The following is a 486-amino-acid chain: Cardiolipin synthase A (486 aa).

The next 2 membrane-spanning stretches (helical) occupy residues I3–I23 and M38–F58. PLD phosphodiesterase domains are found at residues V219–Y246 and Q399–S426. Residues H224, K226, D231, H404, K406, and D411 contribute to the active site.

This sequence belongs to the phospholipase D family. Cardiolipin synthase subfamily. ClsA sub-subfamily.

The protein resides in the cell inner membrane. The catalysed reaction is 2 a 1,2-diacyl-sn-glycero-3-phospho-(1'-sn-glycerol) = a cardiolipin + glycerol. Catalyzes the reversible phosphatidyl group transfer from one phosphatidylglycerol molecule to another to form cardiolipin (CL) (diphosphatidylglycerol) and glycerol. The sequence is that of Cardiolipin synthase A from Buchnera aphidicola subsp. Acyrthosiphon pisum (strain 5A).